Here is a 692-residue protein sequence, read N- to C-terminus: Elongation factor G (692 aa).

One can recognise a tr-type G domain in the interval 8-282 (ENTRNIGIMA…AVIDYLPSPV (275 aa)). Residues 17 to 24 (AHIDAGKT), 81 to 85 (DTPGH), and 135 to 138 (NKMD) contribute to the GTP site.

This sequence belongs to the TRAFAC class translation factor GTPase superfamily. Classic translation factor GTPase family. EF-G/EF-2 subfamily.

It localises to the cytoplasm. In terms of biological role, catalyzes the GTP-dependent ribosomal translocation step during translation elongation. During this step, the ribosome changes from the pre-translocational (PRE) to the post-translocational (POST) state as the newly formed A-site-bound peptidyl-tRNA and P-site-bound deacylated tRNA move to the P and E sites, respectively. Catalyzes the coordinated movement of the two tRNA molecules, the mRNA and conformational changes in the ribosome. This is Elongation factor G from Lysinibacillus sphaericus (strain C3-41).